Reading from the N-terminus, the 166-residue chain is Large ribosomal subunit protein uL10 (166 aa).

The protein belongs to the universal ribosomal protein uL10 family. Part of the ribosomal stalk of the 50S ribosomal subunit. The N-terminus interacts with L11 and the large rRNA to form the base of the stalk. The C-terminus forms an elongated spine to which L12 dimers bind in a sequential fashion forming a multimeric L10(L12)X complex.

Forms part of the ribosomal stalk, playing a central role in the interaction of the ribosome with GTP-bound translation factors. The polypeptide is Large ribosomal subunit protein uL10 (Enterococcus faecalis (strain ATCC 700802 / V583)).